The following is a 492-amino-acid chain: N-succinylglutamate 5-semialdehyde dehydrogenase (492 aa).

NAD(+) is bound at residue 220–225 (GSANTG). Residues Glu243 and Cys277 contribute to the active site.

Belongs to the aldehyde dehydrogenase family. AstD subfamily.

The enzyme catalyses N-succinyl-L-glutamate 5-semialdehyde + NAD(+) + H2O = N-succinyl-L-glutamate + NADH + 2 H(+). The protein operates within amino-acid degradation; L-arginine degradation via AST pathway; L-glutamate and succinate from L-arginine: step 4/5. Functionally, catalyzes the NAD-dependent reduction of succinylglutamate semialdehyde into succinylglutamate. The protein is N-succinylglutamate 5-semialdehyde dehydrogenase of Escherichia coli O157:H7.